A 53-amino-acid chain; its full sequence is MGMSVSHLLIVLLIIFVLFGAGKLPQVMSDLAKGLKAFKDGMKDDGSDNDKNK.

Residues 1–21 (MGMSVSHLLIVLLIIFVLFGA) form a helical membrane-spanning segment.

The protein belongs to the TatA/E family. In terms of assembly, the Tat system comprises two distinct complexes: a TatABC complex, containing multiple copies of TatA, TatB and TatC subunits, and a separate TatA complex, containing only TatA subunits. Substrates initially bind to the TatABC complex, which probably triggers association of the separate TatA complex to form the active translocon.

It localises to the cell inner membrane. Part of the twin-arginine translocation (Tat) system that transports large folded proteins containing a characteristic twin-arginine motif in their signal peptide across membranes. TatA could form the protein-conducting channel of the Tat system. This Rickettsia massiliae (strain Mtu5) protein is Sec-independent protein translocase protein TatA.